The following is a 113-amino-acid chain: Mediator of RNA polymerase II transcription subunit 22 (113 aa).

Belongs to the Mediator complex subunit 22 family. Component of the Mediator complex.

It is found in the nucleus. Component of the Mediator complex, a coactivator involved in the regulated transcription of nearly all RNA polymerase II-dependent genes. Mediator functions as a bridge to convey information from gene-specific regulatory proteins to the basal RNA polymerase II transcription machinery. Mediator is recruited to promoters by direct interactions with regulatory proteins and serves as a scaffold for the assembly of a functional preinitiation complex with RNA polymerase II and the general transcription factors. This is Mediator of RNA polymerase II transcription subunit 22 (SRB6) from Candida glabrata (strain ATCC 2001 / BCRC 20586 / JCM 3761 / NBRC 0622 / NRRL Y-65 / CBS 138) (Yeast).